A 163-amino-acid polypeptide reads, in one-letter code: Probable cobalt-precorrin-6B C(15)-methyltransferase (decarboxylating) (163 aa).

Residues Thr-6, 30 to 34 (GCGSG), Asp-51, and Gly-75 each bind S-adenosyl-L-methionine.

The protein belongs to the methyltransferase superfamily. Archaeal-type CbiT family.

The catalysed reaction is Co-precorrin-6B + S-adenosyl-L-methionine = Co-precorrin-7 + S-adenosyl-L-homocysteine + CO2. It participates in cofactor biosynthesis; adenosylcobalamin biosynthesis; cob(II)yrinate a,c-diamide from sirohydrochlorin (anaerobic route): step 8/10. Functionally, catalyzes the methylation of C-15 in cobalt-precorrin-6B followed by the decarboxylation of C-12 to form cobalt-precorrin-7. This is Probable cobalt-precorrin-6B C(15)-methyltransferase (decarboxylating) from Archaeoglobus fulgidus (strain ATCC 49558 / DSM 4304 / JCM 9628 / NBRC 100126 / VC-16).